Reading from the N-terminus, the 252-residue chain is Imidazole glycerol phosphate synthase subunit HisF (252 aa).

Residues Asp11 and Asp130 contribute to the active site.

This sequence belongs to the HisA/HisF family. In terms of assembly, heterodimer of HisH and HisF.

It localises to the cytoplasm. The enzyme catalyses 5-[(5-phospho-1-deoxy-D-ribulos-1-ylimino)methylamino]-1-(5-phospho-beta-D-ribosyl)imidazole-4-carboxamide + L-glutamine = D-erythro-1-(imidazol-4-yl)glycerol 3-phosphate + 5-amino-1-(5-phospho-beta-D-ribosyl)imidazole-4-carboxamide + L-glutamate + H(+). The protein operates within amino-acid biosynthesis; L-histidine biosynthesis; L-histidine from 5-phospho-alpha-D-ribose 1-diphosphate: step 5/9. Functionally, IGPS catalyzes the conversion of PRFAR and glutamine to IGP, AICAR and glutamate. The HisF subunit catalyzes the cyclization activity that produces IGP and AICAR from PRFAR using the ammonia provided by the HisH subunit. The polypeptide is Imidazole glycerol phosphate synthase subunit HisF (Citrifermentans bemidjiense (strain ATCC BAA-1014 / DSM 16622 / JCM 12645 / Bem) (Geobacter bemidjiensis)).